The primary structure comprises 154 residues: Transcriptional repressor NrdR (154 aa).

The segment at 3-34 is a zinc-finger region; the sequence is CPYCRHPDSRVVDSREADDGQLIRRRRSCPEC. Positions 46–136 constitute an ATP-cone domain; it reads LAVVKRSGVT…VYRSFESLAD (91 aa).

Belongs to the NrdR family. It depends on Zn(2+) as a cofactor.

Its function is as follows. Negatively regulates transcription of bacterial ribonucleotide reductase nrd genes and operons by binding to NrdR-boxes. In Salinispora arenicola (strain CNS-205), this protein is Transcriptional repressor NrdR.